A 275-amino-acid polypeptide reads, in one-letter code: NADPH-dependent 7-cyano-7-deazaguanine reductase (275 aa).

81-83 is a substrate binding site; it reads VES. 83–84 serves as a coordination point for NADPH; sequence SK. The Thioimide intermediate role is filled by Cys-182. The Proton donor role is filled by Asp-189. 221 to 222 provides a ligand contact to substrate; that stretch reads HE. 250–251 serves as a coordination point for NADPH; it reads RG.

This sequence belongs to the GTP cyclohydrolase I family. QueF type 2 subfamily. In terms of assembly, homodimer.

It is found in the cytoplasm. The catalysed reaction is 7-aminomethyl-7-carbaguanine + 2 NADP(+) = 7-cyano-7-deazaguanine + 2 NADPH + 3 H(+). The protein operates within tRNA modification; tRNA-queuosine biosynthesis. Its function is as follows. Catalyzes the NADPH-dependent reduction of 7-cyano-7-deazaguanine (preQ0) to 7-aminomethyl-7-deazaguanine (preQ1). In Polaromonas sp. (strain JS666 / ATCC BAA-500), this protein is NADPH-dependent 7-cyano-7-deazaguanine reductase.